Here is a 157-residue protein sequence, read N- to C-terminus: MKQKILIRIAMTDDTTRAKAMKTAVQFKGVNAVEIKGDHRNQIEVTGVEVDMIALINTLRKKVAFAELVSVAKVEPPKDGDKKPEEEKKPEEKKPEEKKPEEKKPEPCCQPWQKPEPCYQPWPHDGYGVPSSYPYPCDPYNQIGEPVYNQDPNCRIM.

The HMA domain maps to 2-71 (KQKILIRIAM…KVAFAELVSV (70 aa)). The tract at residues 73–115 (KVEPPKDGDKKPEEEKKPEEKKPEEKKPEEKKPEPCCQPWQKP) is disordered. Residues 75–106 (EPPKDGDKKPEEEKKPEEKKPEEKKPEEKKPE) are compositionally biased toward basic and acidic residues. At Cys154 the chain carries Cysteine methyl ester. A lipid anchor (S-farnesyl cysteine) is attached at Cys154. A propeptide spans 155 to 157 (RIM) (removed in mature form).

The protein belongs to the HIPP family.

In terms of biological role, probable heavy-metal-binding protein. This Arabidopsis thaliana (Mouse-ear cress) protein is Heavy metal-associated isoprenylated plant protein 16.